The chain runs to 412 residues: [Pyruvate dehydrogenase (acetyl-transferring)] kinase isozyme 4, mitochondrial (412 aa).

A Histidine kinase domain is found at 138–368 (ILEYKDTCTV…DAIIYLKALS (231 aa)). Residues 254–261 (ELFKNAMR), Asp-293, 312–313 (ST), and 329–334 (GFGYGL) each bind ATP.

It belongs to the PDK/BCKDK protein kinase family. In terms of assembly, homodimer. Interacts with the pyruvate dehydrogenase complex subunit DLAT, and is part of the multimeric pyruvate dehydrogenase complex that contains multiple copies of pyruvate dehydrogenase (E1), dihydrolipoamide acetyltransferase (DLAT, E2) and lipoamide dehydrogenase (DLD, E3).

The protein localises to the mitochondrion matrix. The enzyme catalyses L-seryl-[pyruvate dehydrogenase E1 alpha subunit] + ATP = O-phospho-L-seryl-[pyruvate dehydrogenase E1 alpha subunit] + ADP + H(+). Kinase that plays a key role in regulation of glucose and fatty acid metabolism and homeostasis via phosphorylation of the pyruvate dehydrogenase subunits PDHA1 and PDHA2. This inhibits pyruvate dehydrogenase activity, and thereby regulates metabolite flux through the tricarboxylic acid cycle, down-regulates aerobic respiration and inhibits the formation of acetyl-coenzyme A from pyruvate. Inhibition of pyruvate dehydrogenase decreases glucose utilization and increases fat metabolism in response to prolonged fasting and starvation. Plays an important role in maintaining normal blood glucose levels under starvation, and is involved in the insulin signaling cascade. Via its regulation of pyruvate dehydrogenase activity, plays an important role in maintaining normal blood pH and in preventing the accumulation of ketone bodies under starvation. In the fed state, mediates cellular responses to glucose levels and to a high-fat diet. Regulates both fatty acid oxidation and de novo fatty acid biosynthesis. Plays a role in the generation of reactive oxygen species. Protects detached epithelial cells against anoikis. Plays a role in cell proliferation via its role in regulating carbohydrate and fatty acid metabolism. The polypeptide is [Pyruvate dehydrogenase (acetyl-transferring)] kinase isozyme 4, mitochondrial (Pdk4) (Mus musculus (Mouse)).